A 629-amino-acid polypeptide reads, in one-letter code: Pentatricopeptide repeat-containing protein At1g63150 (629 aa).

PPR repeat units follow at residues 46 to 81 (ASGD…RPFP), 82 to 116 (SIVE…GISH), 117 to 151 (DLYT…GYEP), 152 to 186 (DIVT…GYKP), 187 to 221 (DTFT…GCQP), 222 to 256 (DLVT…RIKA), 257 to 291 (NVVI…GIRP), 292 to 326 (NVVT…KINP), 327 to 361 (NVVT…SIDP), 362 to 396 (DTIT…DCLP), 397 to 431 (NIQT…GLVG), 432 to 466 (NTVT…RVPT), 467 to 501 (DIMT…EMEL), 502 to 532 (NIFI…LSIK), 534 to 568 (DVVT…GTLP), and 569 to 603 (NSGT…GFVG).

Belongs to the PPR family. P subfamily.

This Arabidopsis thaliana (Mouse-ear cress) protein is Pentatricopeptide repeat-containing protein At1g63150.